Consider the following 377-residue polypeptide: Lactosylceramide 1,3-N-acetyl-beta-D-glucosaminyltransferase B (377 aa).

Topologically, residues 1-13 are cytoplasmic; sequence MLISARRLRRCQS. The chain crosses the membrane as a helical; Signal-anchor for type II membrane protein span at residues 14-30; sequence LQLLASCFVLSLMALLV. The Lumenal segment spans residues 31 to 377; that stretch reads QEDNSLVNHV…DTYPCSAAWS (347 aa). Asn56, Asn167, and Asn275 each carry an N-linked (GlcNAc...) asparagine glycan.

It belongs to the glycosyltransferase 31 family.

It is found in the golgi apparatus membrane. It carries out the reaction a beta-D-Gal-(1-&gt;4)-beta-D-Glc-(1&lt;-&gt;1)-Cer(d18:1(4E)) + UDP-N-acetyl-alpha-D-glucosamine = a beta-D-GlcNAc-(1-&gt;3)-beta-D-Gal-(1-&gt;4)-beta-D-Glc-(1&lt;-&gt;1)-Cer(d18:1(4E)) + UDP + H(+). The enzyme catalyses a neolactoside nLc4Cer(d18:1(4E)) + UDP-N-acetyl-alpha-D-glucosamine = a neolactoside IV(3)-beta-GlcNAc-nLc4Cer(d18:1(4E)) + UDP + H(+). Its pathway is protein modification; protein glycosylation. Functionally, beta-1,3-N-acetylglucosaminyltransferase that plays a key role in the synthesis of lacto- or neolacto-series carbohydrate chains on glycolipids. In Xenopus laevis (African clawed frog), this protein is Lactosylceramide 1,3-N-acetyl-beta-D-glucosaminyltransferase B (b3gnt5-b).